Here is a 421-residue protein sequence, read N- to C-terminus: CinA-like protein (421 aa).

It belongs to the CinA family.

The protein is CinA-like protein of Synechococcus sp. (strain ATCC 27144 / PCC 6301 / SAUG 1402/1) (Anacystis nidulans).